The primary structure comprises 478 residues: POU domain, class 2, transcription factor 2 (478 aa).

5 disordered regions span residues 1–82, 167–199, 275–298, 357–391, and 409–478; these read MVHS…PPQA, QAVT…EASD, SSLP…GRRR, PCSA…PLSQ, and TLHP…PYQP. The span at 12–37 shows a compositional bias: basic and acidic residues; it reads RMSKPLEAEKQGLDSPSEHTDTERNG. The span at 38-60 shows a compositional bias: polar residues; sequence PDTNHQNPQNKTSPFSVSPTGPS. One can recognise a POU-specific domain in the interval 195-269; the sequence is EEASDLEELE…LLEKWLNDAE (75 aa). The segment covering 275–285 has biased composition (polar residues); that stretch reads SSLPSPNQLSR. Positions 297–356 form a DNA-binding region, homeobox; sequence RRKKRTSIETNVRFALEKSFLANQKPTSEEILLIAEQLHMEKEVIRVWFCNRRQKEKRIN. The tract at residues 389–410 is leucine-zipper; sequence LSQASSSLSTTVTTLSSAVGTL. A compositionally biased stretch (gly residues) spans 416–425; that stretch reads AGGGAAGGGA.

The protein belongs to the POU transcription factor family. Class-2 subfamily. As to quaternary structure, interacts with NR3C1, AR and PGR. Interacts with POU2AF1; the interaction increases POU2F2 transactivation activity. In terms of tissue distribution, predominantly expressed in B-cells.

It localises to the nucleus. Its activity is regulated as follows. Transactivation activity is enhanced by transcriptional coactivator POU2AF1. Functionally, transcription factor that specifically binds to the octamer motif (5'-ATTTGCAT-3'). Regulates IL6 expression in B cells with POU2AF1. Regulates transcription in a number of tissues in addition to activating immunoglobulin gene expression. Modulates transcription transactivation by NR3C1, AR and PGR. This chain is POU domain, class 2, transcription factor 2 (POU2F2), found in Sus scrofa (Pig).